The sequence spans 652 residues: Phosphomethylpyrimidine synthase (652 aa).

Substrate contacts are provided by residues N235, M264, Y293, H329, 349–351, 390–393, and E429; these read SRG and DGMR. H433 is a Zn(2+) binding site. Position 456 (Y456) interacts with substrate. H497 is a binding site for Zn(2+). Residues C577, C580, and C585 each coordinate [4Fe-4S] cluster.

It belongs to the ThiC family. In terms of assembly, homodimer. It depends on [4Fe-4S] cluster as a cofactor.

It catalyses the reaction 5-amino-1-(5-phospho-beta-D-ribosyl)imidazole + S-adenosyl-L-methionine = 4-amino-2-methyl-5-(phosphooxymethyl)pyrimidine + CO + 5'-deoxyadenosine + formate + L-methionine + 3 H(+). The protein operates within cofactor biosynthesis; thiamine diphosphate biosynthesis. Catalyzes the synthesis of the hydroxymethylpyrimidine phosphate (HMP-P) moiety of thiamine from aminoimidazole ribotide (AIR) in a radical S-adenosyl-L-methionine (SAM)-dependent reaction. This Shewanella woodyi (strain ATCC 51908 / MS32) protein is Phosphomethylpyrimidine synthase.